Reading from the N-terminus, the 543-residue chain is Proline--tRNA ligase, chloroplastic/mitochondrial (543 aa).

A disordered region spans residues 41 to 63; it reads ATAPSGTASPETKSSEVDRLRSD. The span at 53-63 shows a compositional bias: basic and acidic residues; the sequence is KSSEVDRLRSD.

The protein belongs to the class-II aminoacyl-tRNA synthetase family.

The protein resides in the plastid. It localises to the chloroplast. Its subcellular location is the mitochondrion. The catalysed reaction is tRNA(Pro) + L-proline + ATP = L-prolyl-tRNA(Pro) + AMP + diphosphate. In terms of biological role, catalyzes the attachment of proline to tRNA(Pro) in a two-step reaction: proline is first activated by ATP to form Pro-AMP and then transferred to the acceptor end of tRNA(Pro). The sequence is that of Proline--tRNA ligase, chloroplastic/mitochondrial from Arabidopsis thaliana (Mouse-ear cress).